A 617-amino-acid polypeptide reads, in one-letter code: COMPASS component cclA (617 aa).

Low complexity-rich tracts occupy residues 1 to 19 (MASIQPAGSSAPSSNINSP) and 40 to 50 (SSPAPASNASA). Residues 1-89 (MASIQPAGSS…AKKRATAVQN (89 aa)) form a disordered region. Basic residues predominate over residues 57–69 (SKRNKRDSRKKRE). The B30.2/SPRY domain maps to 157–380 (IADTSFPHIK…YAFNLKETPT (224 aa)). Residues 595 to 617 (TPNTEEPAARPENITVGHDVEMS) are disordered.

This sequence belongs to the cclA family. Component of the COMPASS complex.

Its subcellular location is the nucleus. It localises to the chromosome. The protein localises to the telomere. Its function is as follows. Component of the COMPASS (Set1C) complex that specifically mono-, di- and trimethylates histone H3 to form H3K4me1/2/3, which subsequently plays a role in telomere length maintenance and transcription elongation regulation. Controls the production of several secondary metabolites, including astellolides. The chain is COMPASS component cclA from Aspergillus oryzae (strain ATCC 42149 / RIB 40) (Yellow koji mold).